We begin with the raw amino-acid sequence, 155 residues long: Transcription antitermination protein NusB (155 aa).

Belongs to the NusB family.

Involved in transcription antitermination. Required for transcription of ribosomal RNA (rRNA) genes. Binds specifically to the boxA antiterminator sequence of the ribosomal RNA (rrn) operons. The chain is Transcription antitermination protein NusB from Halorhodospira halophila (strain DSM 244 / SL1) (Ectothiorhodospira halophila (strain DSM 244 / SL1)).